The sequence spans 181 residues: Protein Syd (181 aa).

It belongs to the Syd family.

Its subcellular location is the cell inner membrane. Interacts with the SecY protein in vivo. May bind preferentially to an uncomplexed state of SecY, thus functioning either as a chelating agent for excess SecY in the cell or as a regulatory factor that negatively controls the translocase function. The sequence is that of Protein Syd from Citrobacter koseri (strain ATCC BAA-895 / CDC 4225-83 / SGSC4696).